The sequence spans 532 residues: Probable cytochrome c oxidase subunit 1 (532 aa).

The next 8 helical transmembrane spans lie at 33-53 (IMYI…SLLF), 74-94 (VLIT…ALFG), 95-115 (GFGN…FPRL), 118-138 (ISFW…FVDG), 163-183 (MAIF…INLI), 200-220 (PLFV…MPVL), 252-272 (LFWF…FGIV), and 284-304 (IFGY…GFIV). H79 serves as a coordination point for Fe(II)-heme a. H258 and Y262 together coordinate Cu cation. The Cu cation site is built by H307 and H308. A run of 2 helical transmembrane segments spans residues 318–338 (ALIY…IKIF) and 355–375 (MLFS…GIIL). A heme a3-binding site is contributed by H393. Helical transmembrane passes span 394–414 (FHYT…YYWF), 431–451 (FWIT…LGLA), and 473–493 (IGAG…FYTL). A Fe(II)-heme a-binding site is contributed by H395.

This sequence belongs to the heme-copper respiratory oxidase family.

The protein localises to the cell membrane. It carries out the reaction 4 Fe(II)-[cytochrome c] + O2 + 8 H(+)(in) = 4 Fe(III)-[cytochrome c] + 2 H2O + 4 H(+)(out). It functions in the pathway energy metabolism; oxidative phosphorylation. Its function is as follows. Cytochrome c oxidase is the component of the respiratory chain that catalyzes the reduction of oxygen to water. Subunits 1-3 form the functional core of the enzyme complex. CO I is the catalytic subunit of the enzyme. Electrons originating in cytochrome c are transferred via the copper A center of subunit 2 and heme A of subunit 1 to the bimetallic center formed by heme A3 and copper B. This Rickettsia conorii (strain ATCC VR-613 / Malish 7) protein is Probable cytochrome c oxidase subunit 1 (ctaD).